A 247-amino-acid chain; its full sequence is Protein ABHD14A (247 aa).

A helical; Signal-anchor for type II membrane protein transmembrane segment spans residues 11 to 31 (AALLGLGLLLVFLLYMGLPGP). N-linked (GlcNAc...) asparagine glycosylation is present at asparagine 43. Active-site charge relay system residues include serine 147, aspartate 198, and histidine 225.

Belongs to the AB hydrolase superfamily. ABHD14 family. As to expression, widely expressed. Higher expression is detected in brain, kidney, heart, testis, ovary and uterus.

It is found in the cytoplasm. It localises to the membrane. Functionally, possible role in granule neuron development. The polypeptide is Protein ABHD14A (Mus musculus (Mouse)).